The sequence spans 470 residues: Monocarboxylate transporter 4 (470 aa).

The Cytoplasmic segment spans residues 1 to 17 (MGGAVVDEGPTGIKAPD). The chain crosses the membrane as a helical span at residues 18-38 (GGWGWAVLFGCFIITGFSYAF). Over 39–61 (PKAVSVFFKELMHEFGIGYSDTA) the chain is Extracellular. Residues 62–82 (WISSILLAMLYGTGPLCSVCV) form a helical membrane-spanning segment. Topologically, residues 83-84 (NR) are cytoplasmic. The chain crosses the membrane as a helical span at residues 85-105 (FGCRPVMLVGGLFASLGMVAA). At 106-109 (SFCR) the chain is on the extracellular side. The helical transmembrane segment at 110-130 (SIIQIYLTTGVITGLGLALNF) threads the bilayer. Residues 131–149 (QPSLIMLNRYFNKRRPIAN) are Cytoplasmic-facing. A helical membrane pass occupies residues 150 to 170 (GLAAAGSPVFLCALSPLGQLL). Residues 171-179 (QDHYGWRGG) lie on the Extracellular side of the membrane. A helical transmembrane segment spans residues 180-200 (FLILGGLLLNCCVCAALMRPL). Residues 201 to 231 (VAPQVGGGTEPRGPQRPPQRLLDLSVFRDRG) are Cytoplasmic-facing. Residues 232 to 252 (FLIYAVAASIMVLGLFVPPVF) form a helical membrane-spanning segment. The Extracellular segment spans residues 253–267 (VVSYAKDMGVPDTKA). The chain crosses the membrane as a helical span at residues 268–288 (AFLLTILGFIDIFARPTAGFI). The Cytoplasmic portion of the chain corresponds to 289–298 (TGLKKVRPYS). Residues 299 to 319 (VYLFSFAMFFNGFTDLTGSTA) traverse the membrane as a helical segment. The Extracellular portion of the chain corresponds to 320 to 321 (TD). The helical transmembrane segment at 322-342 (YGGLVVFCIFFGISYGMVGAL) threads the bilayer. Residues 343 to 355 (QFEVLMAIVGTQK) are Cytoplasmic-facing. The chain crosses the membrane as a helical span at residues 356-376 (FSSAIGLVLLLEAVAVLIGPP). Residues 377–391 (SGGKLLDATKVYKYV) are Extracellular-facing. Residues 392 to 412 (FILAGAEVLTSSLVLLLGNFF) form a helical membrane-spanning segment. Residues 413-470 (CIGKRKRPEVTEPEEVASEEKLHKPPVDVGVDSREVEHFLKAEPEKNGEVVHTPETSV) are Cytoplasmic-facing. Basolateral sorting signal regions lie at residues 429-446 (ASEE…VDSR) and 446-470 (REVE…ETSV). Residue Ser430 is modified to Phosphoserine. Residue Thr465 is modified to Phosphothreonine. Residue Ser469 is modified to Phosphoserine.

Belongs to the major facilitator superfamily. Monocarboxylate porter (TC 2.A.1.13) family. In terms of assembly, interacts with BSG; interaction mediates SLC16A3 targeting to the plasma membrane.

It is found in the cell membrane. It localises to the basolateral cell membrane. It catalyses the reaction (S)-lactate(in) + H(+)(in) = (S)-lactate(out) + H(+)(out). The catalysed reaction is pyruvate(out) + H(+)(out) = pyruvate(in) + H(+)(in). Its function is as follows. Proton-dependent transporter of monocarboxylates such as L-lactate and pyruvate. Plays a predominant role in the L-lactate efflux from highly glycolytic cells. This chain is Monocarboxylate transporter 4 (Slc16a3), found in Mus musculus (Mouse).